The primary structure comprises 359 residues: tRNA/tmRNA (uracil-C(5))-methyltransferase (359 aa).

S-adenosyl-L-methionine contacts are provided by Gln-183, Tyr-211, Asn-216, Glu-232, and Asp-292. Cys-317 (nucleophile) is an active-site residue. The active-site Proton acceptor is Glu-351.

This sequence belongs to the class I-like SAM-binding methyltransferase superfamily. RNA M5U methyltransferase family. TrmA subfamily.

The enzyme catalyses uridine(54) in tRNA + S-adenosyl-L-methionine = 5-methyluridine(54) in tRNA + S-adenosyl-L-homocysteine + H(+). It carries out the reaction uridine(341) in tmRNA + S-adenosyl-L-methionine = 5-methyluridine(341) in tmRNA + S-adenosyl-L-homocysteine + H(+). Its function is as follows. Dual-specificity methyltransferase that catalyzes the formation of 5-methyluridine at position 54 (m5U54) in all tRNAs, and that of position 341 (m5U341) in tmRNA (transfer-mRNA). The protein is tRNA/tmRNA (uracil-C(5))-methyltransferase of Pseudomonas fluorescens (strain ATCC BAA-477 / NRRL B-23932 / Pf-5).